The chain runs to 208 residues: MSSQYSNVENLSPQTIRQVMKELQDMESTPPEGIKVLINESDVTDIQALIDGPAGTPYAVGIFRVKLTLSKDFPQTPPKAYFLTKIFHPNVASNGEICVNTLKKDWKPDLGIKHILLTIKCLLIVPNPESALNEEAGKMLLERYDDYSQRARMMTEIHAQPAKCGAGASDAKDDDGPSTKKHAGVDKKLQDKKKEKLLKEKKRMLKRL.

Residues 14-160 (QTIRQVMKEL…ARMMTEIHAQ (147 aa)) enclose the UBC core domain. Catalysis depends on cysteine 98, which acts as the Glycyl thioester intermediate. The disordered stretch occupies residues 161–196 (PAKCGAGASDAKDDDGPSTKKHAGVDKKLQDKKKEK). Over residues 170 to 196 (DAKDDDGPSTKKHAGVDKKLQDKKKEK) the composition is skewed to basic and acidic residues.

The protein belongs to the ubiquitin-conjugating enzyme family.

The enzyme catalyses S-ubiquitinyl-[E1 ubiquitin-activating enzyme]-L-cysteine + [E2 ubiquitin-conjugating enzyme]-L-cysteine = [E1 ubiquitin-activating enzyme]-L-cysteine + S-ubiquitinyl-[E2 ubiquitin-conjugating enzyme]-L-cysteine.. The protein operates within protein modification; protein ubiquitination. Its function is as follows. Catalyzes the covalent attachment of ubiquitin to other proteins. Acts as an essential factor of the anaphase promoting complex/cyclosome (APC/C), a cell cycle-regulated ubiquitin ligase that controls progression through mitosis. Acts by specifically elongating polyubiquitin chains initiated by the E2 enzyme vih/UbcH10 on APC/C substrates, enhancing the degradation of APC/C substrates by the proteasome and promoting mitotic exit. The sequence is that of Ubiquitin-conjugating enzyme E2 S from Drosophila grimshawi (Hawaiian fruit fly).